The chain runs to 224 residues: IAP-like protein p27 (224 aa).

One copy of the BIR repeat lies at 29–92 (VDARNQSFAI…GFWSRNCGFM (64 aa)). C62, C65, H82, and C89 together coordinate Zn(2+).

Not essential for growth or virulence. Does not have antiapoptotic function. The sequence is that of IAP-like protein p27 (p27) from Ornithodoros (relapsing fever ticks).